Consider the following 614-residue polypeptide: Probable ATP-dependent RNA helicase DDX5 (614 aa).

A compositionally biased stretch (basic and acidic residues) spans 1 to 15 (MSSYSSDRDRGRDRG). The interval 1-39 (MSSYSSDRDRGRDRGFGAPRFGGSRTGPLSGKKFGNPGE) is disordered. At Ser24 the chain carries Phosphoserine. The residue at position 32 (Lys32) is an N6-acetyllysine; alternate. A Glycyl lysine isopeptide (Lys-Gly) (interchain with G-Cter in SUMO2); alternate cross-link involves residue Lys32. An N6-acetyllysine mark is found at Lys33 and Lys40. Lys45 participates in a covalent cross-link: Glycyl lysine isopeptide (Lys-Gly) (interchain with G-Cter in SUMO2). Lys53 is covalently cross-linked (Glycyl lysine isopeptide (Lys-Gly) (interchain with G-Cter in SUMO2); alternate). A Glycyl lysine isopeptide (Lys-Gly) (interchain with G-Cter in SUMO); alternate cross-link involves residue Lys53. Residue Lys53 forms a Glycyl lysine isopeptide (Lys-Gly) (interchain with G-Cter in SUMO1); alternate linkage. Positions 94-122 (LNFYEANFPANVMDVIARQNFTEPTAIQA) match the Q motif motif. Residues 114 to 116 (FTE), Gln121, and 138 to 145 (AQTGSGKT) contribute to the ATP site. In terms of domain architecture, Helicase ATP-binding spans 125–300 (WPVALSGLDM…EDFLKDYIHI (176 aa)). Lys236 carries the N6-acetyllysine modification. The short motif at 248–251 (DEAD) is the DEAD box element. Phosphotyrosine is present on Tyr297. Positions 328 to 475 (KLIRLMEEIM…AINPKLLQLV (148 aa)) constitute a Helicase C-terminal domain. Residues Lys340, Lys343, Lys388, Lys391, Lys411, Lys437, Lys451, and Lys470 each participate in a glycyl lysine isopeptide (Lys-Gly) (interchain with G-Cter in SUMO2) cross-link. The disordered stretch occupies residues 477–504 (DRGSGRSRGRGGMKDDRRDRYSAGKRGG). The segment at 477–614 (DRGSGRSRGR…GYPMPTGYSQ (138 aa)) is transactivation domain. Residue Ser480 is modified to Phosphoserine. Residues 488-498 (GMKDDRRDRYS) are compositionally biased toward basic and acidic residues. A Glycyl lysine isopeptide (Lys-Gly) (interchain with G-Cter in SUMO2) cross-link involves residue Lys523.

This sequence belongs to the DEAD box helicase family. DDX5/DBP2 subfamily. As to quaternary structure, identified in the spliceosome C complex. Component of a ribonucleoprotein complex containing mRNAs and RNA-binding proteins including DDX5, HNRNPH2 and SRSF1 as well as splicing regulator ARVCF. Interacts with RBM4; the interaction occurs in an RNA-independent manner. Interacts with AGO1 and AGO2. Interacts with ESR1, AR, EP300, CREBBP, POLR2A, TP53, RUNX2 and HDAC1. Self-associates. Interacts with DDX17. Interacts with BRDT. The large PER complex involved in the repression of transcriptional termination is composed of at least PER2, CDK9, DDX5, DHX9, NCBP1 and POLR2A (active). Interacts with DHX36; this interaction occurs in a RNA-dependent manner. Interacts with NUPR1. Interacts with ERCC6. Interacts with DDX3X in the cytoplasm; this interaction may be more efficient when both proteins are unphosphorylated. Sumoylated; sumoylation, promoted by PIAS1, promotes interaction with HDAC1 and transcriptional repression activity. Sumoylation also significantly increases stability, and reduces polyubiquitination. In terms of processing, polyubiquitinated, leading to proteasomal degradation. Post-translationally, weakly phosphorylated in the G1/S phase of the cell cycle and much more at G2/M, especially at Thr and Tyr residues.

The protein resides in the nucleus. The protein localises to the nucleolus. Its subcellular location is the cytoplasm. It carries out the reaction ATP + H2O = ADP + phosphate + H(+). In terms of biological role, involved in the alternative regulation of pre-mRNA splicing; its RNA helicase activity is necessary for increasing tau exon 10 inclusion and occurs in a RBM4-dependent manner. Binds to the tau pre-mRNA in the stem-loop region downstream of exon 10. The rate of ATP hydrolysis is highly stimulated by single-stranded RNA. Involved in transcriptional regulation; the function is independent of the RNA helicase activity. Transcriptional coactivator for androgen receptor AR but probably not ESR1. Synergizes with DDX17 and SRA1 RNA to activate MYOD1 transcriptional activity and involved in skeletal muscle differentiation. Transcriptional coactivator for p53/TP53 and involved in p53/TP53 transcriptional response to DNA damage and p53/TP53-dependent apoptosis. Transcriptional coactivator for RUNX2 and involved in regulation of osteoblast differentiation. Acts as a transcriptional repressor in a promoter-specific manner; the function probably involves association with histone deacetylases, such as HDAC1. As component of a large PER complex is involved in the inhibition of 3' transcriptional termination of circadian target genes such as PER1 and NR1D1 and the control of the circadian rhythms. This chain is Probable ATP-dependent RNA helicase DDX5 (Ddx5), found in Mus musculus (Mouse).